The chain runs to 461 residues: Argininosuccinate lyase (461 aa).

It belongs to the lyase 1 family. Argininosuccinate lyase subfamily.

The protein resides in the cytoplasm. It catalyses the reaction 2-(N(omega)-L-arginino)succinate = fumarate + L-arginine. It participates in amino-acid biosynthesis; L-arginine biosynthesis; L-arginine from L-ornithine and carbamoyl phosphate: step 3/3. The chain is Argininosuccinate lyase from Desulfitobacterium hafniense (strain DSM 10664 / DCB-2).